The following is a 388-amino-acid chain: Succinate--CoA ligase [ADP-forming] subunit beta (388 aa).

The 236-residue stretch at 9-244 folds into the ATP-grasp domain; the sequence is KQLFAEYGLP…PSQDDPREAH (236 aa). ATP is bound by residues K46, 53–55, E99, T102, and E107; that span reads GRG. N199 and D213 together coordinate Mg(2+). Substrate is bound by residues N264 and 321–323; that span reads GIV.

Belongs to the succinate/malate CoA ligase beta subunit family. Heterotetramer of two alpha and two beta subunits. The cofactor is Mg(2+).

It catalyses the reaction succinate + ATP + CoA = succinyl-CoA + ADP + phosphate. It carries out the reaction GTP + succinate + CoA = succinyl-CoA + GDP + phosphate. It participates in carbohydrate metabolism; tricarboxylic acid cycle; succinate from succinyl-CoA (ligase route): step 1/1. Functionally, succinyl-CoA synthetase functions in the citric acid cycle (TCA), coupling the hydrolysis of succinyl-CoA to the synthesis of either ATP or GTP and thus represents the only step of substrate-level phosphorylation in the TCA. The beta subunit provides nucleotide specificity of the enzyme and binds the substrate succinate, while the binding sites for coenzyme A and phosphate are found in the alpha subunit. The chain is Succinate--CoA ligase [ADP-forming] subunit beta from Pseudomonas putida (strain GB-1).